The chain runs to 196 residues: ATP-dependent Clp protease proteolytic subunit (196 aa).

S96 serves as the catalytic Nucleophile. The active site involves H121.

The protein belongs to the peptidase S14 family. In terms of assembly, fourteen ClpP subunits assemble into 2 heptameric rings which stack back to back to give a disk-like structure with a central cavity, resembling the structure of eukaryotic proteasomes.

The protein localises to the cytoplasm. The enzyme catalyses Hydrolysis of proteins to small peptides in the presence of ATP and magnesium. alpha-casein is the usual test substrate. In the absence of ATP, only oligopeptides shorter than five residues are hydrolyzed (such as succinyl-Leu-Tyr-|-NHMec, and Leu-Tyr-Leu-|-Tyr-Trp, in which cleavage of the -Tyr-|-Leu- and -Tyr-|-Trp bonds also occurs).. Functionally, cleaves peptides in various proteins in a process that requires ATP hydrolysis. Has a chymotrypsin-like activity. Plays a major role in the degradation of misfolded proteins. This chain is ATP-dependent Clp protease proteolytic subunit, found in Streptococcus pneumoniae (strain ATCC 700669 / Spain 23F-1).